A 500-amino-acid chain; its full sequence is Histidine ammonia-lyase (500 aa).

Residues 142 to 144 (ASG) constitute a cross-link (5-imidazolinone (Ala-Gly)). S143 carries the 2,3-didehydroalanine (Ser) modification.

Belongs to the PAL/histidase family. In terms of processing, contains an active site 4-methylidene-imidazol-5-one (MIO), which is formed autocatalytically by cyclization and dehydration of residues Ala-Ser-Gly.

The protein resides in the cytoplasm. The enzyme catalyses L-histidine = trans-urocanate + NH4(+). Its pathway is amino-acid degradation; L-histidine degradation into L-glutamate; N-formimidoyl-L-glutamate from L-histidine: step 1/3. The chain is Histidine ammonia-lyase from Macrococcus caseolyticus (strain JCSC5402) (Macrococcoides caseolyticum).